Here is a 67-residue protein sequence, read N- to C-terminus: Large ribosomal subunit protein bL35 (67 aa).

It belongs to the bacterial ribosomal protein bL35 family.

The sequence is that of Large ribosomal subunit protein bL35 from Dehalococcoides mccartyi (strain ATCC BAA-2266 / KCTC 15142 / 195) (Dehalococcoides ethenogenes (strain 195)).